The chain runs to 179 residues: Large ribosomal subunit protein uL5 (179 aa).

Belongs to the universal ribosomal protein uL5 family. Part of the 50S ribosomal subunit; part of the 5S rRNA/L5/L18/L25 subcomplex. Contacts the 5S rRNA and the P site tRNA. Forms a bridge to the 30S subunit in the 70S ribosome.

Its function is as follows. This is one of the proteins that bind and probably mediate the attachment of the 5S RNA into the large ribosomal subunit, where it forms part of the central protuberance. In the 70S ribosome it contacts protein S13 of the 30S subunit (bridge B1b), connecting the 2 subunits; this bridge is implicated in subunit movement. Contacts the P site tRNA; the 5S rRNA and some of its associated proteins might help stabilize positioning of ribosome-bound tRNAs. This chain is Large ribosomal subunit protein uL5, found in Deinococcus geothermalis (strain DSM 11300 / CIP 105573 / AG-3a).